Consider the following 539-residue polypeptide: Phosphoenolpyruvate carboxykinase (ATP) (539 aa).

Residues Arg64, Tyr206, and Lys212 each coordinate substrate. Residues Lys212, His231, and Gly247–Thr255 each bind ATP. Mn(2+)-binding residues include Lys212 and His231. Mn(2+) is bound at residue Asp268. ATP-binding positions include Glu296, Arg332, Arg448–Ile449, and Thr454. A substrate-binding site is contributed by Arg332.

This sequence belongs to the phosphoenolpyruvate carboxykinase (ATP) family. Monomer. Mn(2+) is required as a cofactor.

The protein resides in the cytoplasm. It carries out the reaction oxaloacetate + ATP = phosphoenolpyruvate + ADP + CO2. Its pathway is carbohydrate biosynthesis; gluconeogenesis. In terms of biological role, involved in the gluconeogenesis. Catalyzes the conversion of oxaloacetate (OAA) to phosphoenolpyruvate (PEP) through direct phosphoryl transfer between the nucleoside triphosphate and OAA. The sequence is that of Phosphoenolpyruvate carboxykinase (ATP) from Sodalis glossinidius (strain morsitans).